We begin with the raw amino-acid sequence, 282 residues long: Elongation factor Ts (282 aa).

The involved in Mg(2+) ion dislocation from EF-Tu stretch occupies residues 79–82; sequence TDFV.

The protein belongs to the EF-Ts family.

The protein localises to the cytoplasm. Functionally, associates with the EF-Tu.GDP complex and induces the exchange of GDP to GTP. It remains bound to the aminoacyl-tRNA.EF-Tu.GTP complex up to the GTP hydrolysis stage on the ribosome. The polypeptide is Elongation factor Ts (Colwellia psychrerythraea (strain 34H / ATCC BAA-681) (Vibrio psychroerythus)).